Reading from the N-terminus, the 152-residue chain is Ribosomal RNA large subunit methyltransferase H (152 aa).

Residues leucine 65, glycine 96, and 115 to 120 (LGPMTW) contribute to the S-adenosyl-L-methionine site.

Belongs to the RNA methyltransferase RlmH family. As to quaternary structure, homodimer.

It localises to the cytoplasm. The enzyme catalyses pseudouridine(1915) in 23S rRNA + S-adenosyl-L-methionine = N(3)-methylpseudouridine(1915) in 23S rRNA + S-adenosyl-L-homocysteine + H(+). Specifically methylates the pseudouridine at position 1915 (m3Psi1915) in 23S rRNA. This is Ribosomal RNA large subunit methyltransferase H from Gluconacetobacter diazotrophicus (strain ATCC 49037 / DSM 5601 / CCUG 37298 / CIP 103539 / LMG 7603 / PAl5).